The chain runs to 513 residues: ATP synthase subunit alpha (513 aa).

169 to 176 (GDRQTGKT) provides a ligand contact to ATP.

It belongs to the ATPase alpha/beta chains family. As to quaternary structure, F-type ATPases have 2 components, CF(1) - the catalytic core - and CF(0) - the membrane proton channel. CF(1) has five subunits: alpha(3), beta(3), gamma(1), delta(1), epsilon(1). CF(0) has three main subunits: a(1), b(2) and c(9-12). The alpha and beta chains form an alternating ring which encloses part of the gamma chain. CF(1) is attached to CF(0) by a central stalk formed by the gamma and epsilon chains, while a peripheral stalk is formed by the delta and b chains.

The protein resides in the cell inner membrane. It carries out the reaction ATP + H2O + 4 H(+)(in) = ADP + phosphate + 5 H(+)(out). Functionally, produces ATP from ADP in the presence of a proton gradient across the membrane. The alpha chain is a regulatory subunit. This chain is ATP synthase subunit alpha, found in Salmonella agona (strain SL483).